Here is a 357-residue protein sequence, read N- to C-terminus: uncharacterized protein (357 aa).

A Phosphoserine modification is found at Ser-72. Disordered stretches follow at residues 79-98 (GVNEDHYTGGGSSNNNRPSR), 264-290 (QKQLQGNSKPVKNLPNSNAKQRAGASV), and 323-357 (ISDEDEEDEEEDSFQQRSANNRILPAEILSNEPLK). Positions 324-335 (SDEDEEDEEEDS) are enriched in acidic residues.

This is an uncharacterized protein from Saccharomyces cerevisiae (strain ATCC 204508 / S288c) (Baker's yeast).